The primary structure comprises 329 residues: ATP-dependent (S)-NAD(P)H-hydrate dehydratase (329 aa).

The transit peptide at 1–28 (MALGPGCRAVRGCRPVLKRAFSLHKAHS) directs the protein to the mitochondrion. The YjeF C-terminal domain occupies 35-326 (ILQLVRSVVP…AEVGPAFRRL (292 aa)). Lys-49 is subject to N6-acetyllysine. Phosphotyrosine is present on Tyr-67. (6S)-NADPHX is bound by residues Gly-135 and 188–194 (NHVEFGR). Residues 228 to 232 (KGEQD) and 247 to 256 (GSGRRCGGQG) each bind ATP. Residue Asp-257 coordinates (6S)-NADPHX.

The protein belongs to the NnrD/CARKD family. Mg(2+) is required as a cofactor.

Its subcellular location is the mitochondrion. The enzyme catalyses (6S)-NADHX + ATP = ADP + phosphate + NADH + H(+). It carries out the reaction (6S)-NADPHX + ATP = ADP + phosphate + NADPH + H(+). Functionally, catalyzes the dehydration of the S-form of NAD(P)HX at the expense of ATP, which is converted to ADP. Together with NAD(P)HX epimerase, which catalyzes the epimerization of the S- and R-forms, the enzyme allows the repair of both epimers of NAD(P)HX, a damaged form of NAD(P)H that is a result of enzymatic or heat-dependent hydration. The chain is ATP-dependent (S)-NAD(P)H-hydrate dehydratase from Bos taurus (Bovine).